We begin with the raw amino-acid sequence, 79 residues long: MQVLVRDNNVDQALRVLKKKMQREGLFREMKARSAFEKPSEKRAREKAEAIRRQRKLARKKLQREGLLPAPKKVLRPTR.

Residues 57 to 79 (LARKKLQREGLLPAPKKVLRPTR) form a disordered region.

The protein belongs to the bacterial ribosomal protein bS21 family.

The chain is Small ribosomal subunit protein bS21A from Rhizobium johnstonii (strain DSM 114642 / LMG 32736 / 3841) (Rhizobium leguminosarum bv. viciae).